We begin with the raw amino-acid sequence, 590 residues long: Plasmepsin V (590 aa).

The Lumenal portion of the chain corresponds to 1 to 544; sequence MNNYFLRKEN…EKENIFLKVS (544 aa). A coiled-coil region spans residues 33-81; sequence CNNVENKIDNVGKKIENVGKKIGDMENKNDNVENKNDNVGNKNDNVKNA. Positions 100-514 constitute a Peptidase A1 domain; sequence YFLDIDIGKP…DLQQNQIAFI (415 aa). D118 is a catalytic residue. Disulfide bonds link C128/C211, C131/C134, C155/C166, C160/C171, C259/C518, C389/C434, and C443/C479. The span at 282–291 shows a compositional bias: basic and acidic residues; that stretch reads KEKQKMDKSD. Positions 282-316 are disordered; it reads KEKQKMDKSDNNSSNKGNVSIKLKNNDKNDDEENN. Residues 292–304 are compositionally biased toward low complexity; that stretch reads NNSSNKGNVSIKL. D365 is an active-site residue. Residues 545 to 565 traverse the membrane as a helical segment; sequence YINLYCLWLLLALTILLSLIL. The Cytoplasmic segment spans residues 566 to 590; it reads YVRKMFYMDYFPLSDQNKSPIQEST.

This sequence belongs to the peptidase A1 family. As to quaternary structure, component of a complex composed of SPC25 and PMV; the interaction is mediated via the transmembrane domains. The complex interacts with the SEC61 channel-forming translocon complex and is involved in the recognition and import of PEXEL motif-containing proteins into the ER for subsequent export. It is not clear if the zymogen has a cleavable propeptide. In vitro, appears to be cleaved between Asn-80 and Ala-81. Cleavage of the putative propeptide is dispensable for catalytic activity.

The protein localises to the endoplasmic reticulum membrane. With respect to regulation, inhibited by peptidomimetic inhibitor WEHI-842. Inhibited by Cu(2+) and Hg(2+). During the asexual blood stage, plays an essential role in the export of several proteins into the host erythrocytes by cleaving the pentameric localization motif RxLxE/Q/D (termed Plasmodium export element (PEXEL)) located downstream of the N-terminal secretory signal sequence. Specifically, cleaves after the leucine residue in the RxLxE/Q/D (or RxLxxE) motif of exported proteins including RESA, EMP2, EMP3, KAHRP, RIF/Rifin and STEVOR. Also, by regulating protein export, plays an essential role in gametocyte development and thus, parasite transmission to the mosquito vector. This is Plasmepsin V from Plasmodium falciparum (isolate 3D7).